Here is a 477-residue protein sequence, read N- to C-terminus: ETS translocation variant 1 (477 aa).

A Phosphoserine modification is found at serine 94. The segment at 128–179 is disordered; sequence PQVGMRPSNPPTPSSTPVSPLHHASPNTAHTPKPDRAFPAHLPPSQSIPDST. Phosphoserine; by RPS6KA1 and RPS6KA5 is present on residues serine 191 and serine 216. Residue lysine 317 forms a Glycyl lysine isopeptide (Lys-Gly) (interchain with G-Cter in SUMO2) linkage. Residues 335 to 415 constitute a DNA-binding region (ETS); that stretch reads LQLWQFLVAL…AGERYVYKFV (81 aa).

This sequence belongs to the ETS family. In terms of processing, sumoylated. Phosphorylated at Ser-191 and Ser-216 by RPS6KA1 and RPS6KA5; phosphorylation activates transcriptional activity. In terms of tissue distribution, abundant in kidney. Moderate levels seen in the heart, brain, lung, embryo and lower levels seen in spleen, intestine, testis and thymus.

It localises to the nucleus. Transcriptional activator that binds to DNA sequences containing the consensus pentanucleotide 5'-CGGA[AT]-3'. Required for olfactory dopaminergic neuron differentiation; may directly activate expression of tyrosine hydroxylase (TH). This Mus musculus (Mouse) protein is ETS translocation variant 1.